A 977-amino-acid chain; its full sequence is Fc receptor-like protein 5 (977 aa).

The N-terminal stretch at 1 to 15 is a signal peptide; it reads MLLWVILLVLAPVSG. Over 16 to 851 the chain is Extracellular; that stretch reads QFARTPRPII…ANRSGPFATG (836 aa). 8 Ig-like C2-type domains span residues 23 to 101, 188 to 271, 287 to 374, 380 to 463, 473 to 556, 566 to 651, 659 to 744, and 752 to 834; these read PIIF…LDFS, PFTR…SVIS, PVLT…LSVT, PVLN…KAVS, PVLT…EVVS, PILT…ISLS, PILT…VTLK, and PVLT…ETVT. 3 disulfide bridges follow: Cys44-Cys85, Cys211-Cys260, and Cys308-Cys355. An N-linked (GlcNAc...) asparagine glycan is attached at Asn383. 5 disulfides stabilise this stretch: Cys401–Cys448, Cys494–Cys541, Cys587–Cys634, Cys680–Cys727, and Cys773–Cys819. The helical transmembrane segment at 852-872 threads the bilayer; it reads VAGGLLSIAGLAAGALLLYCW. Topologically, residues 873–977 are cytoplasmic; it reads LSRKAGRKPA…LFLASSAPHR (105 aa). Positions 879–898 are disordered; it reads RKPASDPARSPSDSDSQEPT. A compositionally biased stretch (low complexity) spans 883–892; that stretch reads SDPARSPSDS. 4 short sequence motifs (ITIM motif) span residues 897–902, 910–915, 922–927, and 952–957; these read PTYHNV, PVYTNA, VVYSEV, and IIYSEV.

In terms of assembly, interacts with CR2. Interacts with CD19. In terms of tissue distribution, expressed in marginal zone B-cells, immunoblasts, tonsillar germinal center centrocytes and in the intraepithelial and interfollicular regions of the tonsil. Expressed in many lymphoma cell lines and on hairy cell leukemia cells. Isoform 1, isoform 3, isoform 4 and isoform 5 are detected in lymph node, spleen, bone marrow, and small intestine with preponderance of isoform 3. Expressed in mature and memory B-cells and down-regulated in germinal center cells (at protein level).

It is found in the cell membrane. Functionally, plays an important role in B-cell response to antigen that acts both as a negative or positive coreceptor. Inhibits B-cell receptor (BCR) signaling in the absence of CR2 stimulation but engagement with CR2 and the BCR lead to a superior calcium response compared to CR2 and BCR costimulation. May be involved in B-cell development and differentiation in peripheral lymphoid organs and may be useful markers of B-cell stages. May have an immunoregulatory role in marginal zone B-cells. May play a role in fertilization. The sequence is that of Fc receptor-like protein 5 (FCRL5) from Homo sapiens (Human).